The sequence spans 275 residues: NH(3)-dependent NAD(+) synthetase (275 aa).

50–57 contacts ATP; it reads GISGGVDS. Asp-56 lines the Mg(2+) pocket. Arg-147 contributes to the deamido-NAD(+) binding site. Thr-167 provides a ligand contact to ATP. Glu-172 is a Mg(2+) binding site. Lys-180 and Asp-187 together coordinate deamido-NAD(+). ATP contacts are provided by Lys-196 and Thr-218. 267–268 is a deamido-NAD(+) binding site; that stretch reads HK.

It belongs to the NAD synthetase family. Homodimer.

The catalysed reaction is deamido-NAD(+) + NH4(+) + ATP = AMP + diphosphate + NAD(+) + H(+). It functions in the pathway cofactor biosynthesis; NAD(+) biosynthesis; NAD(+) from deamido-NAD(+) (ammonia route): step 1/1. Catalyzes the ATP-dependent amidation of deamido-NAD to form NAD. Uses ammonia as a nitrogen source. This Pseudomonas savastanoi pv. phaseolicola (strain 1448A / Race 6) (Pseudomonas syringae pv. phaseolicola (strain 1448A / Race 6)) protein is NH(3)-dependent NAD(+) synthetase.